The primary structure comprises 317 residues: Acetyl-coenzyme A carboxylase carboxyl transferase subunit alpha (317 aa).

The region spanning 40–294 (RLQHKSQELT…KQQILADLAE (255 aa)) is the CoA carboxyltransferase C-terminal domain.

Belongs to the AccA family. As to quaternary structure, acetyl-CoA carboxylase is a heterohexamer composed of biotin carboxyl carrier protein (AccB), biotin carboxylase (AccC) and two subunits each of ACCase subunit alpha (AccA) and ACCase subunit beta (AccD).

The protein resides in the cytoplasm. The enzyme catalyses N(6)-carboxybiotinyl-L-lysyl-[protein] + acetyl-CoA = N(6)-biotinyl-L-lysyl-[protein] + malonyl-CoA. The protein operates within lipid metabolism; malonyl-CoA biosynthesis; malonyl-CoA from acetyl-CoA: step 1/1. Functionally, component of the acetyl coenzyme A carboxylase (ACC) complex. First, biotin carboxylase catalyzes the carboxylation of biotin on its carrier protein (BCCP) and then the CO(2) group is transferred by the carboxyltransferase to acetyl-CoA to form malonyl-CoA. The protein is Acetyl-coenzyme A carboxylase carboxyl transferase subunit alpha of Haemophilus ducreyi (strain 35000HP / ATCC 700724).